We begin with the raw amino-acid sequence, 273 residues long: Formamidopyrimidine-DNA glycosylase (273 aa).

P2 (schiff-base intermediate with DNA) is an active-site residue. E3 acts as the Proton donor in catalysis. Residue K60 is the Proton donor; for beta-elimination activity of the active site. DNA-binding residues include H94, R113, and K154. The FPG-type zinc finger occupies 239-273; that stretch reads EAYGRTGEPCRRCGTPIERIVVAQRSTHICPVCQA. Residue R263 is the Proton donor; for delta-elimination activity of the active site.

The protein belongs to the FPG family. In terms of assembly, monomer. Zn(2+) serves as cofactor.

It catalyses the reaction Hydrolysis of DNA containing ring-opened 7-methylguanine residues, releasing 2,6-diamino-4-hydroxy-5-(N-methyl)formamidopyrimidine.. The enzyme catalyses 2'-deoxyribonucleotide-(2'-deoxyribose 5'-phosphate)-2'-deoxyribonucleotide-DNA = a 3'-end 2'-deoxyribonucleotide-(2,3-dehydro-2,3-deoxyribose 5'-phosphate)-DNA + a 5'-end 5'-phospho-2'-deoxyribonucleoside-DNA + H(+). Involved in base excision repair of DNA damaged by oxidation or by mutagenic agents. Acts as a DNA glycosylase that recognizes and removes damaged bases. Has a preference for oxidized purines, such as 7,8-dihydro-8-oxoguanine (8-oxoG). Has AP (apurinic/apyrimidinic) lyase activity and introduces nicks in the DNA strand. Cleaves the DNA backbone by beta-delta elimination to generate a single-strand break at the site of the removed base with both 3'- and 5'-phosphates. The protein is Formamidopyrimidine-DNA glycosylase of Herpetosiphon aurantiacus (strain ATCC 23779 / DSM 785 / 114-95).